A 130-amino-acid chain; its full sequence is Small ribosomal subunit protein uS11 (130 aa).

The protein belongs to the universal ribosomal protein uS11 family. Part of the 30S ribosomal subunit. Interacts with proteins S7 and S18. Binds to IF-3.

In terms of biological role, located on the platform of the 30S subunit, it bridges several disparate RNA helices of the 16S rRNA. Forms part of the Shine-Dalgarno cleft in the 70S ribosome. In Gloeothece citriformis (strain PCC 7424) (Cyanothece sp. (strain PCC 7424)), this protein is Small ribosomal subunit protein uS11.